We begin with the raw amino-acid sequence, 154 residues long: Histone H2B type F-M (154 aa).

The span at 1 to 18 (MAAASAMAEASSETTSEE) shows a compositional bias: low complexity. Positions 1-61 (MAAASAMAEA…RGDSFGDSFT (61 aa)) are disordered. The segment covering 34 to 50 (QKQKRRGCRGSRRRHAN) has biased composition (basic residues).

Belongs to the histone H2B family. The nucleosome is a histone octamer containing two molecules each of H2A, H2B, H3 and H4 assembled in one H3-H4 heterotetramer and two H2A-H2B heterodimers. The octamer wraps approximately 147 bp of DNA.

It localises to the nucleus. It is found in the chromosome. Functionally, core component of nucleosome. Nucleosomes wrap and compact DNA into chromatin, limiting DNA accessibility to the cellular machineries which require DNA as a template. Histones thereby play a central role in transcription regulation, DNA repair, DNA replication and chromosomal stability. DNA accessibility is regulated via a complex set of post-translational modifications of histones, also called histone code, and nucleosome remodeling. The polypeptide is Histone H2B type F-M (Homo sapiens (Human)).